Reading from the N-terminus, the 445-residue chain is GTPase Der (445 aa).

EngA-type G domains are found at residues 3–167 (PVIA…YAGQ) and 180–353 (IKIA…AAAM). GTP-binding positions include 9-16 (GRPNVGKS), 56-60 (DTGGF), 119-122 (NKAE), 186-193 (GRPNVGKS), 233-237 (DTAGL), and 298-301 (NKWD). Positions 354–438 (AKLPTPKLTR…PLRIEFRSSN (85 aa)) constitute a KH-like domain.

Belongs to the TRAFAC class TrmE-Era-EngA-EngB-Septin-like GTPase superfamily. EngA (Der) GTPase family. As to quaternary structure, associates with the 50S ribosomal subunit.

In terms of biological role, GTPase that plays an essential role in the late steps of ribosome biogenesis. The chain is GTPase Der from Burkholderia cenocepacia (strain HI2424).